Here is a 448-residue protein sequence, read N- to C-terminus: Ribosomal protein uS12 methylthiotransferase RimO (448 aa).

In terms of domain architecture, MTTase N-terminal spans 16 to 126 (PKISFVSLGC…VVAAVHEAVP (111 aa)). Residues C25, C61, C90, C157, C161, and C164 each coordinate [4Fe-4S] cluster. A Radical SAM core domain is found at 143 to 380 (LTPRHYAYLK…METQNGIALR (238 aa)). A TRAM domain is found at 383–448 (RAKVGKRLPV…EAYDLYGSVA (66 aa)).

Belongs to the methylthiotransferase family. RimO subfamily. [4Fe-4S] cluster serves as cofactor.

It is found in the cytoplasm. The catalysed reaction is L-aspartate(89)-[ribosomal protein uS12]-hydrogen + (sulfur carrier)-SH + AH2 + 2 S-adenosyl-L-methionine = 3-methylsulfanyl-L-aspartate(89)-[ribosomal protein uS12]-hydrogen + (sulfur carrier)-H + 5'-deoxyadenosine + L-methionine + A + S-adenosyl-L-homocysteine + 2 H(+). In terms of biological role, catalyzes the methylthiolation of an aspartic acid residue of ribosomal protein uS12. The sequence is that of Ribosomal protein uS12 methylthiotransferase RimO from Methylobacterium radiotolerans (strain ATCC 27329 / DSM 1819 / JCM 2831 / NBRC 15690 / NCIMB 10815 / 0-1).